A 333-amino-acid chain; its full sequence is Adenosine deaminase (333 aa).

Zn(2+) is bound by residues histidine 12 and histidine 14. Residues histidine 14, aspartate 16, and glycine 170 each coordinate substrate. Histidine 197 is a binding site for Zn(2+). Residue glutamate 200 is the Proton donor of the active site. Residue aspartate 278 coordinates Zn(2+). A substrate-binding site is contributed by aspartate 279.

Belongs to the metallo-dependent hydrolases superfamily. Adenosine and AMP deaminases family. Adenosine deaminase subfamily. It depends on Zn(2+) as a cofactor.

It carries out the reaction adenosine + H2O + H(+) = inosine + NH4(+). The catalysed reaction is 2'-deoxyadenosine + H2O + H(+) = 2'-deoxyinosine + NH4(+). Its function is as follows. Catalyzes the hydrolytic deamination of adenosine and 2-deoxyadenosine. The protein is Adenosine deaminase of Photorhabdus laumondii subsp. laumondii (strain DSM 15139 / CIP 105565 / TT01) (Photorhabdus luminescens subsp. laumondii).